A 20-amino-acid polypeptide reads, in one-letter code: Pregnancy-associated glycoprotein 55h (20 aa).

N-linked (GlcNAc...) asparagine glycosylation is present at asparagine 4.

It belongs to the peptidase A1 family. As to expression, highly expressed in the placenta between day 60 and day 100 of gestation.

Its subcellular location is the secreted. The protein resides in the extracellular space. The polypeptide is Pregnancy-associated glycoprotein 55h (Ovis aries (Sheep)).